Reading from the N-terminus, the 1102-residue chain is WD repeat-containing protein 72 (1102 aa).

WD repeat units lie at residues 15 to 54, 60 to 102, 160 to 197, 318 to 362, 402 to 441, 459 to 504, 507 to 552, and 555 to 594; these read APPH…KISA, GHSA…CMEK, NCMC…NSIQ, KEQS…VSKF, AGTA…KARL, GHHQ…ILHK, LEAG…CLLH, and KHLF…LERH. Phosphoserine occurs at positions 1081 and 1083.

The protein localises to the cytoplasmic vesicle. Its function is as follows. Plays a major role in formation of tooth enamel. Specifically required during the maturation phase of amelogenesis for normal formation of the enamel matrix and clearance of enamel proteins. May be involved in localization of the calcium transporter SLC24A4 to the ameloblast cell membrane. This is WD repeat-containing protein 72 (WDR72) from Homo sapiens (Human).